We begin with the raw amino-acid sequence, 924 residues long: Nodulation receptor kinase (924 aa).

A signal peptide spans 1-29 (MMELRVICIIRLVVACVLCLCIFIRSASS). Residues 361-382 (EVIQKMRKELLLQNQDNEALES) adopt a coiled-coil conformation. LRR repeat units follow at residues 406–428 (VITKLDLSSSNLKGTIPSSVTEM), 430–452 (KLQILNLSHNHFDGYIPSFPPSS), 453–475 (LLISVDLSYNDLTGQLPESIISL), and 477–498 (HLNSLYFGCNQHMRDDDEAKLN). A helical transmembrane segment spans residues 520-540 (FMIGAITSGSILITLAVVILF). The Protein kinase domain occupies 595 to 872 (EKYKTLIGEG…IVRELEDALI (278 aa)). ATP-binding positions include 601–609 (IGEGGFGSV) and lysine 623. Aspartate 721 serves as the catalytic Proton acceptor.

The protein belongs to the protein kinase superfamily. Ser/Thr protein kinase family. In terms of processing, may be phosphorylated.

It localises to the membrane. The catalysed reaction is L-seryl-[protein] + ATP = O-phospho-L-seryl-[protein] + ADP + H(+). It catalyses the reaction L-threonyl-[protein] + ATP = O-phospho-L-threonyl-[protein] + ADP + H(+). Functionally, involved in the perception of symbiotic fungi and bacteria and required for the calcium spiking. Part of the perception/transduction system leading to nodulation or mycorrhizal infection. The protein is Nodulation receptor kinase (NORK) of Pisum sativum (Garden pea).